The primary structure comprises 202 residues: Oxopyrrolidines biosynthesis cluster protein O (202 aa).

Its function is as follows. Part of the gene cluster that mediates the biosynthesis of oxopyrrolidines, polyketide-amino acid hybrid compounds with feature structures of tetramic acid. Does not seem to play a role in oxopyrrolidines A and B biosynthesis. This Penicillium oxalicum (strain 114-2 / CGMCC 5302) (Penicillium decumbens) protein is Oxopyrrolidines biosynthesis cluster protein O.